A 427-amino-acid polypeptide reads, in one-letter code: L-threonine dehydratase biosynthetic IlvA (427 aa).

Position 63 is an N6-(pyridoxal phosphate)lysine (Lys-63). Pyridoxal 5'-phosphate contacts are provided by residues Asn-90, 193 to 197 (GGGGC), and Ser-319. The 75-residue stretch at 343-417 (HYFLVDFPQK…TEMHVETLQP (75 aa)) folds into the ACT-like domain.

This sequence belongs to the serine/threonine dehydratase family. In terms of assembly, homotetramer. Pyridoxal 5'-phosphate is required as a cofactor.

It carries out the reaction L-threonine = 2-oxobutanoate + NH4(+). It functions in the pathway amino-acid biosynthesis; L-isoleucine biosynthesis; 2-oxobutanoate from L-threonine: step 1/1. In terms of biological role, catalyzes the anaerobic formation of alpha-ketobutyrate and ammonia from threonine in a two-step reaction. The first step involved a dehydration of threonine and a production of enamine intermediates (aminocrotonate), which tautomerizes to its imine form (iminobutyrate). Both intermediates are unstable and short-lived. The second step is the nonenzymatic hydrolysis of the enamine/imine intermediates to form 2-ketobutyrate and free ammonia. In the low water environment of the cell, the second step is accelerated by RidA. The polypeptide is L-threonine dehydratase biosynthetic IlvA (ilvA) (Mycobacterium leprae (strain TN)).